Reading from the N-terminus, the 550-residue chain is Carboxylesterase 4A (550 aa).

The signal sequence occupies residues 1–20 (MNWILCLSLTLLLVVQTAWG). Cysteines 88 and 116 form a disulfide. The active-site Acyl-ester intermediate is the serine 221. Residues cysteine 273 and cysteine 284 are joined by a disulfide bond. Asparagine 276 carries N-linked (GlcNAc...) asparagine glycosylation. The active-site Charge relay system is glutamate 353. A glycan (N-linked (GlcNAc...) asparagine) is linked at asparagine 386. Residue histidine 465 is the Charge relay system of the active site.

It belongs to the type-B carboxylesterase/lipase family.

The protein resides in the secreted. Probable carboxylesterase. The polypeptide is Carboxylesterase 4A (CES4A) (Bos taurus (Bovine)).